A 333-amino-acid chain; its full sequence is Autoinducer 2 import system permease protein LsrD (333 aa).

The next 10 helical transmembrane spans lie at 7-27 (YGWE…FGIA), 45-65 (ICIG…GIDI), 70-90 (TIGL…PMAA), 91-111 (AIPL…ALIL), 118-138 (LVIT…LSGI), 162-182 (LFGL…CWLF), 212-232 (TLYL…IVLV), 240-260 (SDLG…GGAN), 261-281 (IYGG…IGYL), and 288-308 (AGVP…IAVV).

Belongs to the binding-protein-dependent transport system permease family. AraH/RbsC subfamily. As to quaternary structure, the complex is composed of two ATP-binding proteins (LsrA), two transmembrane proteins (LsrC and LsrD) and a solute-binding protein (LsrB).

The protein resides in the cell inner membrane. Its function is as follows. Part of the ABC transporter complex LsrABCD involved in autoinducer 2 (AI-2) import. Probably responsible for the translocation of the substrate across the membrane. In Photorhabdus luminescens (Xenorhabdus luminescens), this protein is Autoinducer 2 import system permease protein LsrD (lsrD).